We begin with the raw amino-acid sequence, 135 residues long: Glutaredoxin-C3 (135 aa).

In terms of domain architecture, Glutaredoxin spans 26–134 (VARVERLASE…PLLKEAGALW (109 aa)). Residues Cys46 and Cys49 are joined by a disulfide bond. Positions 132–135 (ALWL) match the Responsive for interaction with TGA factors motif.

Belongs to the glutaredoxin family. CC-type subfamily.

Its subcellular location is the cytoplasm. The protein localises to the nucleus. Has a glutathione-disulfide oxidoreductase activity in the presence of NADPH and glutathione reductase. Reduces low molecular weight disulfides and proteins. The chain is Glutaredoxin-C3 (GRXC3) from Oryza sativa subsp. japonica (Rice).